The sequence spans 414 residues: Gamma-glutamyl phosphate reductase (414 aa).

This sequence belongs to the gamma-glutamyl phosphate reductase family.

It localises to the cytoplasm. The catalysed reaction is L-glutamate 5-semialdehyde + phosphate + NADP(+) = L-glutamyl 5-phosphate + NADPH + H(+). The protein operates within amino-acid biosynthesis; L-proline biosynthesis; L-glutamate 5-semialdehyde from L-glutamate: step 2/2. Catalyzes the NADPH-dependent reduction of L-glutamate 5-phosphate into L-glutamate 5-semialdehyde and phosphate. The product spontaneously undergoes cyclization to form 1-pyrroline-5-carboxylate. The sequence is that of Gamma-glutamyl phosphate reductase from Bacillus anthracis (strain A0248).